The primary structure comprises 201 residues: Ras-related protein Rab-1B (201 aa).

At Met1 the chain carries N-acetylmethionine. GTP contacts are provided by Ser17, Gly18, Val19, Gly20, Lys21, Ser22, Cys23, Tyr33, Thr34, Glu35, Ser36, Ser39, and Thr40. A Mg(2+)-binding site is contributed by Ser22. A Switch 1 motif is present at residues 30–45 (DDTYTESYISTIGVDF). Residues Thr40 and Asp63 each coordinate Mg(2+). A switch 2 region; required for interaction with REP1/CHM region spans residues 64-83 (TAGQERFRTITSSYYRGAHG). The Switch 2 signature appears at 65–80 (AGQERFRTITSSYYRG). Positions 66, 121, 122, 124, 151, 152, and 153 each coordinate GTP. Residues 174 to 201 (GPGAASGGERPNLKIDSTPVKPAGGGCC) are disordered. 2 S-geranylgeranyl cysteine lipidation sites follow: Cys200 and Cys201. Cysteine methyl ester is present on Cys201.

This sequence belongs to the small GTPase superfamily. Rab family. As to quaternary structure, interacts with MICAL1 and MICAL2. Interacts (in GTP-bound form) with MICALCL, MICAL1 and MILCAL3. Interacts with GDI1; the interaction requires the GDP-bound state. Interacts with CHM/REP1; the interaction requires the GDP-bound form and is necessary for prenylation by GGTase II. Interacts with RabGAP TBC1D20. Interacts (in GDP-bound form) with lipid phosphatase MTMR6 (via GRAM domain); the interaction regulates MTMR6 recruitment to the endoplasmic reticulum-Golgi intermediate compartment. Interacts (in GDP-bound form) with lipid phosphatase MTMR7. Mg(2+) is required as a cofactor. Post-translationally, prenylated; by GGTase II, only after interaction of the substrate with Rab escort protein 1 (REP1).

It is found in the cytoplasm. The protein resides in the membrane. The protein localises to the preautophagosomal structure membrane. It localises to the perinuclear region. It carries out the reaction GTP + H2O = GDP + phosphate + H(+). With respect to regulation, regulated by guanine nucleotide exchange factors (GEFs) which promote the exchange of bound GDP for free GTP. Regulated by GTPase activating proteins (GAPs) including TBC1D20 which increases the GTP hydrolysis activity. Inhibited by GDP dissociation inhibitors (GDIs). In terms of biological role, the small GTPases Rab are key regulators of intracellular membrane trafficking, from the formation of transport vesicles to their fusion with membranes. Rabs cycle between an inactive GDP-bound form and an active GTP-bound form that is able to recruit to membranes different set of downstream effectors directly responsible for vesicle formation, movement, tethering and fusion. Plays a role in the initial events of the autophagic vacuole development which take place at specialized regions of the endoplasmic reticulum. Regulates vesicular transport between the endoplasmic reticulum and successive Golgi compartments. Required to modulate the compacted morphology of the Golgi. Promotes the recruitment of lipid phosphatase MTMR6 to the endoplasmic reticulum-Golgi intermediate compartment. The chain is Ras-related protein Rab-1B (RAB1B) from Macaca fascicularis (Crab-eating macaque).